We begin with the raw amino-acid sequence, 408 residues long: DNA primase DnaG (408 aa).

The Toprim domain maps to 165 to 243; it reads PELIIVEGRA…KIDYVARAPT (79 aa). 3 residues coordinate Mg(2+): Glu171, Asp216, and Asp218.

Belongs to the archaeal DnaG primase family. As to quaternary structure, forms a ternary complex with MCM helicase and DNA. Component of the archaeal exosome complex. The cofactor is Mg(2+).

It catalyses the reaction ssDNA + n NTP = ssDNA/pppN(pN)n-1 hybrid + (n-1) diphosphate.. Its function is as follows. RNA polymerase that catalyzes the synthesis of short RNA molecules used as primers for DNA polymerase during DNA replication. Also part of the exosome, which is a complex involved in RNA degradation. Acts as a poly(A)-binding protein that enhances the interaction between heteromeric, adenine-rich transcripts and the exosome. The chain is DNA primase DnaG from Sulfurisphaera tokodaii (strain DSM 16993 / JCM 10545 / NBRC 100140 / 7) (Sulfolobus tokodaii).